A 66-amino-acid polypeptide reads, in one-letter code: Disk-determining factor A (66 aa).

Involved in cell-shape determination. Required for the formation of disks. This Haloferax volcanii (strain ATCC 29605 / DSM 3757 / JCM 8879 / NBRC 14742 / NCIMB 2012 / VKM B-1768 / DS2) (Halobacterium volcanii) protein is Disk-determining factor A.